The chain runs to 92 residues: Small ribosomal subunit protein uS19 (92 aa).

The protein belongs to the universal ribosomal protein uS19 family.

In terms of biological role, protein S19 forms a complex with S13 that binds strongly to the 16S ribosomal RNA. In Cyanothece sp. (strain PCC 7425 / ATCC 29141), this protein is Small ribosomal subunit protein uS19.